A 289-amino-acid chain; its full sequence is 4-diphosphocytidyl-2-C-methyl-D-erythritol kinase (289 aa).

Lys-10 is an active-site residue. 94–104 (PVAAGLAGGSS) serves as a coordination point for ATP. Asp-136 is a catalytic residue.

This sequence belongs to the GHMP kinase family. IspE subfamily.

It carries out the reaction 4-CDP-2-C-methyl-D-erythritol + ATP = 4-CDP-2-C-methyl-D-erythritol 2-phosphate + ADP + H(+). It functions in the pathway isoprenoid biosynthesis; isopentenyl diphosphate biosynthesis via DXP pathway; isopentenyl diphosphate from 1-deoxy-D-xylulose 5-phosphate: step 3/6. Catalyzes the phosphorylation of the position 2 hydroxy group of 4-diphosphocytidyl-2C-methyl-D-erythritol. The protein is 4-diphosphocytidyl-2-C-methyl-D-erythritol kinase of Bacillus cytotoxicus (strain DSM 22905 / CIP 110041 / 391-98 / NVH 391-98).